A 145-amino-acid polypeptide reads, in one-letter code: Large ribosomal subunit protein uL15 (145 aa).

Composition is skewed to basic residues over residues 1–13 (MIRKTKKIRKQRG) and 22–33 (TKKRRGAGHRGG). Residues 1–41 (MIRKTKKIRKQRGSRSVGGGCTKKRRGAGHRGGRGQAGGNK) are disordered.

The protein belongs to the universal ribosomal protein uL15 family. As to quaternary structure, part of the 50S ribosomal subunit.

In terms of biological role, binds to the 23S rRNA. This chain is Large ribosomal subunit protein uL15, found in Methanosphaera stadtmanae (strain ATCC 43021 / DSM 3091 / JCM 11832 / MCB-3).